The primary structure comprises 816 residues: Acyl-homoserine lactone acylase QuiP (816 aa).

A signal peptide spans 1 to 33; it reads MASPALSHFLPRFGVAAAVAGVLSLTGCQTWNA. The active-site Nucleophile is serine 262.

This sequence belongs to the peptidase S45 family. As to quaternary structure, heterodimer of an alpha subunit and a beta subunit processed from the same precursor.

It is found in the periplasm. The catalysed reaction is an N-acyl-L-homoserine lactone + H2O = L-homoserine lactone + a carboxylate. Functionally, catalyzes the deacylation of acyl-homoserine lactone (AHL or acyl-HSL), releasing homoserine lactone (HSL) and the corresponding fatty acid. Possesses a specificity for the degradation of long-chain acyl-HSLs (side chains of seven or more carbons in length). The chain is Acyl-homoserine lactone acylase QuiP (quiP) from Pseudomonas fluorescens (strain Pf0-1).